The following is a 402-amino-acid chain: Acetate kinase (402 aa).

Residue Asn-7 participates in Mg(2+) binding. Lys-14 contributes to the ATP binding site. Arg-95 serves as a coordination point for substrate. Residue Asp-152 is the Proton donor/acceptor of the active site. ATP contacts are provided by residues 212-216 (HLGNG), 286-288 (DMR), and 334-338 (GIGEN). Glu-388 is a Mg(2+) binding site.

The protein belongs to the acetokinase family. In terms of assembly, homodimer. It depends on Mg(2+) as a cofactor. Mn(2+) serves as cofactor.

The protein localises to the cytoplasm. The catalysed reaction is acetate + ATP = acetyl phosphate + ADP. Its pathway is metabolic intermediate biosynthesis; acetyl-CoA biosynthesis; acetyl-CoA from acetate: step 1/2. Its function is as follows. Catalyzes the formation of acetyl phosphate from acetate and ATP. Can also catalyze the reverse reaction. The protein is Acetate kinase of Nitratidesulfovibrio vulgaris (strain DP4) (Desulfovibrio vulgaris).